Consider the following 98-residue polypeptide: Toxin ParE1 (98 aa).

The protein belongs to the RelE toxin family.

In terms of biological role, toxic component of a type II toxin-antitoxin (TA) system. Its toxic effect is neutralized by coexpression with cognate antitoxin ParD1. The chain is Toxin ParE1 (parE1) from Mycobacterium tuberculosis (strain CDC 1551 / Oshkosh).